The sequence spans 805 residues: Sucrose synthase (805 aa).

A GT-B glycosyltransferase region spans residues 275-752 (MVFNVVILSP…GLQRIEEKYT (478 aa)).

Belongs to the glycosyltransferase 1 family. Plant sucrose synthase subfamily.

It catalyses the reaction an NDP-alpha-D-glucose + D-fructose = a ribonucleoside 5'-diphosphate + sucrose + H(+). Functionally, sucrose-cleaving enzyme that provides UDP-glucose and fructose for various metabolic pathways. The chain is Sucrose synthase from Medicago sativa (Alfalfa).